Reading from the N-terminus, the 260-residue chain is Large ribosomal subunit protein uL30 (260 aa).

Met1 carries the post-translational modification N-acetylmethionine. Tandem repeats lie at residues 7-18 (KKKKVAAALGTL), 19-30 (KKKKVPAVPETL), 31-42 (KKKRRNFAELKV), 43-54 (KRLRKKFALKTL), and 55-66 (RKARRKLIYEKA). The segment at 7-66 (KKKKVAAALGTLKKKKVPAVPETLKKKRRNFAELKVKRLRKKFALKTLRKARRKLIYEKA) is 5 X 12 AA tandem repeats. Thr29 carries the phosphothreonine modification. An N6-acetyllysine modification is found at Lys136. At Lys139 the chain carries N6-succinyllysine. Tyr151 carries the phosphotyrosine modification.

Belongs to the universal ribosomal protein uL30 family. Component of the large ribosomal subunit. Homodimer. Interacts with DHX33.

It localises to the cytoplasm. In terms of biological role, component of the large ribosomal subunit. The ribosome is a large ribonucleoprotein complex responsible for the synthesis of proteins in the cell. Binds to G-rich structures in 28S rRNA and in mRNAs. Plays a regulatory role in the translation apparatus; inhibits cell-free translation of mRNAs. In Rattus norvegicus (Rat), this protein is Large ribosomal subunit protein uL30 (Rpl7).